Consider the following 267-residue polypeptide: 4-hydroxy-tetrahydrodipicolinate reductase (267 aa).

10–15 (GCLGKQ) is an NAD(+) binding site. R37 serves as a coordination point for NADP(+). NAD(+) is bound by residues 99 to 101 (GTT) and 122 to 125 (TTNV). The active-site Proton donor/acceptor is H154. H155 provides a ligand contact to (S)-2,3,4,5-tetrahydrodipicolinate. K158 serves as the catalytic Proton donor. 164–165 (GT) provides a ligand contact to (S)-2,3,4,5-tetrahydrodipicolinate.

The protein belongs to the DapB family.

The protein resides in the cytoplasm. The catalysed reaction is (S)-2,3,4,5-tetrahydrodipicolinate + NAD(+) + H2O = (2S,4S)-4-hydroxy-2,3,4,5-tetrahydrodipicolinate + NADH + H(+). It catalyses the reaction (S)-2,3,4,5-tetrahydrodipicolinate + NADP(+) + H2O = (2S,4S)-4-hydroxy-2,3,4,5-tetrahydrodipicolinate + NADPH + H(+). It functions in the pathway amino-acid biosynthesis; L-lysine biosynthesis via DAP pathway; (S)-tetrahydrodipicolinate from L-aspartate: step 4/4. In terms of biological role, catalyzes the conversion of 4-hydroxy-tetrahydrodipicolinate (HTPA) to tetrahydrodipicolinate. The chain is 4-hydroxy-tetrahydrodipicolinate reductase from Ehrlichia canis (strain Jake).